Consider the following 305-residue polypeptide: Olfactory receptor 4F5 (305 aa).

Residues 1–18 lie on the Extracellular side of the membrane; that stretch reads MVTEFIFLGLSDSQELQT. The helical transmembrane segment at 19-42 threads the bilayer; it reads FLFMLFFVFYGGIVFGNLLIVITV. Residues 43–50 lie on the Cytoplasmic side of the membrane; it reads VSDSHLHS. Residues 51–72 form a helical membrane-spanning segment; it reads PMYFLLANLSLIDLSLSSVTAP. At 73–93 the chain is on the extracellular side; that stretch reads KMITDFFSQRKVISFKGCLVQ. A disulfide bridge links Cys-90 with Cys-182. A helical membrane pass occupies residues 94–113; that stretch reads IFLLHFFGGSEMVILIAMGF. Topologically, residues 114–132 are cytoplasmic; that stretch reads DRYIAICKPLHYTTIMCGN. Residues 133-151 form a helical membrane-spanning segment; sequence ACVGIMAVTWGIGFLHSVS. The Extracellular portion of the chain corresponds to 152–188; it reads QLAFAVHLLFCGPNEVDSFYCDLPRVIKLACTDTYRL. A helical transmembrane segment spans residues 189–212; the sequence is DIMVIANSGVLTVCSFVLLIISYT. At 213-228 the chain is on the cytoplasmic side; that stretch reads IILMTIQHRPLDKSSK. The helical transmembrane segment at 229–251 threads the bilayer; that stretch reads ALSTLTAHITVVLLFFGPCVFIY. The Extracellular segment spans residues 252–262; the sequence is AWPFPIKSLDK. The chain crosses the membrane as a helical span at residues 263-282; sequence FLAVFYSVITPLLNPIIYTL. The Cytoplasmic segment spans residues 283–305; sequence RNKDMKTAIRQLRKWDAHSSVKF.

The protein belongs to the G-protein coupled receptor 1 family.

The protein localises to the cell membrane. Odorant receptor. The chain is Olfactory receptor 4F5 (OR4F5) from Homo sapiens (Human).